The sequence spans 289 residues: 3-methyl-2-oxobutanoate hydroxymethyltransferase (289 aa).

Residues Asp58 and Asp99 each contribute to the Mg(2+) site. 3-methyl-2-oxobutanoate-binding positions include 58-59 (DS), Asp99, and Lys128. Position 130 (Glu130) interacts with Mg(2+). Catalysis depends on Glu197, which acts as the Proton acceptor.

Belongs to the PanB family. In terms of assembly, homodecamer; pentamer of dimers. It depends on Mg(2+) as a cofactor.

Its subcellular location is the cytoplasm. The enzyme catalyses 3-methyl-2-oxobutanoate + (6R)-5,10-methylene-5,6,7,8-tetrahydrofolate + H2O = 2-dehydropantoate + (6S)-5,6,7,8-tetrahydrofolate. Its pathway is cofactor biosynthesis; (R)-pantothenate biosynthesis; (R)-pantoate from 3-methyl-2-oxobutanoate: step 1/2. In terms of biological role, catalyzes the reversible reaction in which hydroxymethyl group from 5,10-methylenetetrahydrofolate is transferred onto alpha-ketoisovalerate to form ketopantoate. This is 3-methyl-2-oxobutanoate hydroxymethyltransferase from Leptothrix cholodnii (strain ATCC 51168 / LMG 8142 / SP-6) (Leptothrix discophora (strain SP-6)).